The chain runs to 1337 residues: Rho GTPase-activating protein 29 (1337 aa).

Residues 1–13 (MFRQGSNSGNKRM) show a composition bias toward polar residues. Disordered regions lie at residues 1-20 (MFRQGSNSGNKRMTSGARLS), 369-397 (REEYEKARSSTSRTEEEQPAAGGRTLEKK), 513-551 (SSKTGMSLHKRSQNSTRSSHGNLSQGSATSMDNHSADEV), and 564-654 (ERRS…TGLS). The region spanning 225-488 (EQVDLLLLKN…QAKKYEPGQR (264 aa)) is the F-BAR domain. The stretch at 326–443 (LLARKNDLDK…SEILAQIRKL (118 aa)) forms a coiled coil. The span at 369-384 (REEYEKARSSTSRTEE) shows a compositional bias: basic and acidic residues. 2 stretches are compositionally biased toward polar residues: residues 525–545 (QNSTRSSHGNLSQGSATSMDN) and 568–579 (NSSIDMQVPRTQ). Residues 596-613 (CSDSESAGGSSESRSMDS) are compositionally biased toward low complexity. Residues 676–723 (AHTHKLRKLRAPSKCRECDSLVVFHGAECEECSLACHKKCLETLAIQC) form a Phorbol-ester/DAG-type zinc finger. Residues 737–950 (IDFAQVVKNS…LLIKHHQMIF (214 aa)) form the Rho-GAP domain. Residues 960 to 973 (TSPTVSQASFGSSI) show a composition bias toward polar residues. Disordered stretches follow at residues 960–983 (TSPTVSQASFGSSIQDKESKLSRH), 1016–1066 (MKTG…AKPV), 1083–1114 (SRNTVEHDHSPAAIEETTEPEKPTTPRHTNFY), 1149–1210 (PPSG…KPSD), and 1273–1337 (TVSR…AHFV). Residues 974 to 983 (QDKESKLSRH) show a composition bias toward basic and acidic residues. Over residues 1083–1092 (SRNTVEHDHS) the composition is skewed to basic and acidic residues. Polar residues-rich tracts occupy residues 1161–1177 (MASQSSTSRKDGTSQSG) and 1295–1310 (VTLSPPQSPGSSTEEL). Residues 1325–1337 (RMQELEHREAHFV) are compositionally biased toward basic and acidic residues.

Its function is as follows. GTPase activator for the Rho-type GTPases by converting them to an inactive GDP-bound state. Has strong activity toward RHOA, and weaker activity toward RAC1 and CDC42. This Danio rerio (Zebrafish) protein is Rho GTPase-activating protein 29 (arhgap29).